The following is a 347-amino-acid chain: Virulence plasmid protein pGP2-D (347 aa).

This Chlamydia psittaci (Chlamydophila psittaci) protein is Virulence plasmid protein pGP2-D.